The chain runs to 229 residues: 7-cyano-7-deazaguanine synthase (229 aa).

9–19 (LSGGLDSATVL) contacts ATP. Zn(2+)-binding residues include C188, C198, C201, and C204.

The protein belongs to the QueC family. Requires Zn(2+) as cofactor.

The catalysed reaction is 7-carboxy-7-deazaguanine + NH4(+) + ATP = 7-cyano-7-deazaguanine + ADP + phosphate + H2O + H(+). The protein operates within purine metabolism; 7-cyano-7-deazaguanine biosynthesis. Its function is as follows. Catalyzes the ATP-dependent conversion of 7-carboxy-7-deazaguanine (CDG) to 7-cyano-7-deazaguanine (preQ(0)). This Methylobacillus flagellatus (strain ATCC 51484 / DSM 6875 / VKM B-1610 / KT) protein is 7-cyano-7-deazaguanine synthase.